A 328-amino-acid polypeptide reads, in one-letter code: DNA-directed RNA polymerase subunit alpha (328 aa).

The tract at residues 1 to 235 (MQGSVTEFLK…EQLDAFVDLR (235 aa)) is alpha N-terminal domain (alpha-NTD). An alpha C-terminal domain (alpha-CTD) region spans residues 249–328 (FDPILLRPVD…ENWPPASLAE (80 aa)).

The protein belongs to the RNA polymerase alpha chain family. As to quaternary structure, homodimer. The RNAP catalytic core consists of 2 alpha, 1 beta, 1 beta' and 1 omega subunit. When a sigma factor is associated with the core the holoenzyme is formed, which can initiate transcription.

The enzyme catalyses RNA(n) + a ribonucleoside 5'-triphosphate = RNA(n+1) + diphosphate. DNA-dependent RNA polymerase catalyzes the transcription of DNA into RNA using the four ribonucleoside triphosphates as substrates. The polypeptide is DNA-directed RNA polymerase subunit alpha (Pseudoalteromonas translucida (strain TAC 125)).